Consider the following 772-residue polypeptide: Semaphorin-3A (772 aa).

A signal peptide spans 1–22 (MGWLRGIALLSLGVLLAGRVNC). Residues 31 to 514 (RLKLSYKEML…SATGVSQLPL (484 aa)) enclose the Sema domain. The N-linked (GlcNAc...) asparagine glycan is linked to N53. A disulfide bridge connects residues C103 and C114. The N-linked (GlcNAc...) asparagine glycan is linked to N125. Cystine bridges form between C132-C141, C269-C381, C293-C341, and C517-C535. Positions 576 to 665 (PSGQTLEEKI…GFIQTLLKVT (90 aa)) constitute an Ig-like C2-type domain. N591 is a glycosylation site (N-linked (GlcNAc...) asparagine). Cysteines 650 and 723 form a disulfide. Positions 730 to 772 (DRKQRRQRPANAQVNTNKWKHLQENKKGRNRRTHEFERAPRSV) are disordered. A compositionally biased stretch (basic and acidic residues) spans 750–772 (HLQENKKGRNRRTHEFERAPRSV).

This sequence belongs to the semaphorin family. As to expression, expressed at relatively high levels in brain and muscle, moderate levels in lung, bursa, and heart and virtually absent in liver. Collapsin-1, -2, -3, and -5 bind to overlapping but distinct axon tracts.

It is found in the secreted. Its function is as follows. Induces the collapse and paralysis of neuronal growth cones. Could serve as a ligand that guides specific growth cones by a motility-inhibiting mechanism. Binds to neuropilin. The sequence is that of Semaphorin-3A (SEMA3A) from Gallus gallus (Chicken).